A 224-amino-acid chain; its full sequence is Lipoprotein-releasing system ATP-binding protein LolD (224 aa).

The ABC transporter domain occupies 4–224 (LSIRNVFKSY…RLAGGEVSEA (221 aa)). Residue 40–47 (GASGAGKS) coordinates ATP.

This sequence belongs to the ABC transporter superfamily. Lipoprotein translocase (TC 3.A.1.125) family. In terms of assembly, the complex is composed of two ATP-binding proteins (LolD) and two transmembrane proteins (LolC and LolE).

The protein localises to the cell inner membrane. Its function is as follows. Part of the ABC transporter complex LolCDE involved in the translocation of mature outer membrane-directed lipoproteins, from the inner membrane to the periplasmic chaperone, LolA. Responsible for the formation of the LolA-lipoprotein complex in an ATP-dependent manner. This Myxococcus xanthus (strain DK1622) protein is Lipoprotein-releasing system ATP-binding protein LolD.